A 160-amino-acid chain; its full sequence is 2-C-methyl-D-erythritol 2,4-cyclodiphosphate synthase (160 aa).

A divalent metal cation is bound by residues Asp11 and His13. 4-CDP-2-C-methyl-D-erythritol 2-phosphate contacts are provided by residues 11–13 and 37–38; these read DIH and HS. Residue His45 coordinates a divalent metal cation. 4-CDP-2-C-methyl-D-erythritol 2-phosphate-binding positions include 59 to 61, 135 to 138, and Arg145; these read DIG and TTNE.

It belongs to the IspF family. Homotrimer. The cofactor is a divalent metal cation.

It catalyses the reaction 4-CDP-2-C-methyl-D-erythritol 2-phosphate = 2-C-methyl-D-erythritol 2,4-cyclic diphosphate + CMP. The protein operates within isoprenoid biosynthesis; isopentenyl diphosphate biosynthesis via DXP pathway; isopentenyl diphosphate from 1-deoxy-D-xylulose 5-phosphate: step 4/6. In terms of biological role, involved in the biosynthesis of isopentenyl diphosphate (IPP) and dimethylallyl diphosphate (DMAPP), two major building blocks of isoprenoid compounds. Catalyzes the conversion of 4-diphosphocytidyl-2-C-methyl-D-erythritol 2-phosphate (CDP-ME2P) to 2-C-methyl-D-erythritol 2,4-cyclodiphosphate (ME-CPP) with a corresponding release of cytidine 5-monophosphate (CMP). The protein is 2-C-methyl-D-erythritol 2,4-cyclodiphosphate synthase of Synechococcus elongatus (strain ATCC 33912 / PCC 7942 / FACHB-805) (Anacystis nidulans R2).